Consider the following 144-residue polypeptide: Large ribosomal subunit protein uL16 (144 aa).

The span at 1–14 shows a compositional bias: basic residues; the sequence is MLTPKRVKHRKQHR. The disordered stretch occupies residues 1–22; sequence MLTPKRVKHRKQHRPSLAGKAN.

Belongs to the universal ribosomal protein uL16 family. As to quaternary structure, part of the 50S ribosomal subunit.

In terms of biological role, binds 23S rRNA and is also seen to make contacts with the A and possibly P site tRNAs. The polypeptide is Large ribosomal subunit protein uL16 (Syntrophomonas wolfei subsp. wolfei (strain DSM 2245B / Goettingen)).